The sequence spans 391 residues: Homocitrate synthase AksA (391 aa).

Positions 20–271 (ITIYDTTLRD…DLGFNIGVLY (252 aa)) constitute a Pyruvate carboxyltransferase domain.

This sequence belongs to the alpha-IPM synthase/homocitrate synthase family.

It carries out the reaction acetyl-CoA + 2-oxoglutarate + H2O = (2R)-homocitrate + CoA + H(+). The enzyme catalyses 2-oxoadipate + acetyl-CoA + H2O = (R)-dihomocitrate + CoA + H(+). The catalysed reaction is 2-oxoheptanedioate + acetyl-CoA + H2O = (R)-trihomocitrate + CoA + H(+). It participates in organic acid metabolism; 2-oxosuberate biosynthesis. Catalyzes the condensation of alpha-ketoglutarate and acetyl-CoA to form (R)-homocitrate. Can also catalyze the condensation of alpha-ketoadipate with acetyl-CoA to form (R)-homo(2)citrate, and the condensation of alpha-ketopimelate with acetyl-CoA to form (R)-homo(3)citrate. These reactions are part of the biosynthesis pathway of coenzyme B and biotin. The protein is Homocitrate synthase AksA (aksA) of Methanothermobacter thermautotrophicus (strain ATCC 29096 / DSM 1053 / JCM 10044 / NBRC 100330 / Delta H) (Methanobacterium thermoautotrophicum).